The following is a 403-amino-acid chain: MIRGKVFYKGEFVEAGIEVENGRIKRIGKLVEGKEVKGVILPAGIDVHVHLRDFAEKRKETIETGTLSALHGGICLVVDQPNTKPPVDDAETYFRRMGKAEKSVYVDYALNLALTNSNHGKIGSIMRKISERYFVPAVGEVFIQHDSEDLQIDYETLSSVYKRFEGVVFTIHAEDPAYVARGSPNFVFRRREAEVLAVERLVELGKFHFCHISTKDSAKEILNSNSTYEVTPHHMLLSVEDYGRLGNLVNVNPPLREREDVEWLFRNFHRIDVLASDHAPHTLEDKEAGASGFPGVETMYPLFVNLASKGYISFKTLVEKIASNPARIFGFKGYGEIEVGNYANFAVFDLKKVDEIRAERLHSKCGWTPFEGFEAVFPDKVYLRGKELLENEMKAGNVLKKRV.

His48 and His50 together coordinate Zn(2+). Residues 50–52 and Asn82 each bind substrate; that span reads HLR. Residues Glu140, His172, His211, and Asp277 each contribute to the Zn(2+) site. Asp277 is an active-site residue. Residue His281 coordinates substrate.

The protein belongs to the metallo-dependent hydrolases superfamily. DHOase family. Class I DHOase subfamily. It depends on Zn(2+) as a cofactor.

The catalysed reaction is (S)-dihydroorotate + H2O = N-carbamoyl-L-aspartate + H(+). The protein operates within pyrimidine metabolism; UMP biosynthesis via de novo pathway; (S)-dihydroorotate from bicarbonate: step 3/3. In terms of biological role, catalyzes the reversible cyclization of carbamoyl aspartate to dihydroorotate. The polypeptide is Dihydroorotase (Archaeoglobus fulgidus (strain ATCC 49558 / DSM 4304 / JCM 9628 / NBRC 100126 / VC-16)).